The chain runs to 455 residues: F-box/LRR-repeat protein At5g35995 (455 aa).

In terms of domain architecture, F-box spans 4-51 (RDFISSLPDEVLGKKILSLLPTKLVVSTSVLSKRWRNLFHFVDSFDLE). LRR repeat units lie at residues 114–138 (DHYL…SYRT), 152–176 (FPAL…LISG), 282–305 (IRNV…CYTM), 308–324 (FDKL…ENGW), and 325–348 (QALP…LLHK).

This is F-box/LRR-repeat protein At5g35995 from Arabidopsis thaliana (Mouse-ear cress).